The following is a 90-amino-acid chain: Sakacin-A immunity factor (90 aa).

Its function is as follows. Imparts immunity to sakacin-A to naturally sensitive host strains. The polypeptide is Sakacin-A immunity factor (saiA) (Latilactobacillus sakei (Lactobacillus sakei)).